The chain runs to 407 residues: Serine/threonine-protein kinase GRIK2 (407 aa).

Positions 21 to 64 (SGSRNQQSPKPYDDDTHSCDSDVTSTARGEEEEDEEEVEQKSRS) are disordered. Basic and acidic residues predominate over residues 31 to 40 (PYDDDTHSCD). Positions 107–370 (YVRVCKIGSG…LKNVSEHPWV (264 aa)) constitute a Protein kinase domain. ATP-binding positions include 113–121 (IGSGSYGKV) and lysine 136. Threonine 153 carries the post-translational modification Phosphothreonine; by autocatalysis. Aspartate 238 serves as the catalytic Proton acceptor. At serine 260 the chain carries Phosphoserine; by KIN10.

Belongs to the protein kinase superfamily. Ser/Thr protein kinase family. In terms of assembly, associates with the SNF1-related protein kinase (SnRK) complex. Interacts with AL1, a geminivirus (TGMV) protein essential for viral replication. As to expression, expressed in shoot apical meristem, leaf primordium and emerging petiole (at protein level).

It carries out the reaction L-seryl-[protein] + ATP = O-phospho-L-seryl-[protein] + ADP + H(+). The enzyme catalyses L-threonyl-[protein] + ATP = O-phospho-L-threonyl-[protein] + ADP + H(+). Activated when autophosphorylated at Thr-153 and inactivated when phosphorylated at Ser-260 by SnRK1.1/KIN10. Functionally, activates SnRK1.1/KIN10 and SnRK1.2/KIN11 by phosphorylation of their activation-loop 'Thr-198' and 'Thr-176', respectively. Required for the regulation by SnRK1 kinases of the transcription of a large set of genes, the modification the activity of metabolic enzymes, and the control of various nutrient-responsive cellular developmental processes. The sequence is that of Serine/threonine-protein kinase GRIK2 (GRIK2) from Arabidopsis thaliana (Mouse-ear cress).